We begin with the raw amino-acid sequence, 359 residues long: Peptide chain release factor 1 (359 aa).

Residue Q236 is modified to N5-methylglutamine. Residues Q288 to R307 are disordered. Over residues A293–R307 the composition is skewed to basic and acidic residues.

It belongs to the prokaryotic/mitochondrial release factor family. Methylated by PrmC. Methylation increases the termination efficiency of RF1.

It is found in the cytoplasm. In terms of biological role, peptide chain release factor 1 directs the termination of translation in response to the peptide chain termination codons UAG and UAA. This chain is Peptide chain release factor 1 (prfA), found in Streptococcus gordonii (strain Challis / ATCC 35105 / BCRC 15272 / CH1 / DL1 / V288).